Consider the following 697-residue polypeptide: Glycine--tRNA ligase beta subunit (697 aa).

The protein belongs to the class-II aminoacyl-tRNA synthetase family. In terms of assembly, tetramer of two alpha and two beta subunits.

The protein localises to the cytoplasm. The enzyme catalyses tRNA(Gly) + glycine + ATP = glycyl-tRNA(Gly) + AMP + diphosphate. The protein is Glycine--tRNA ligase beta subunit of Solidesulfovibrio magneticus (strain ATCC 700980 / DSM 13731 / RS-1) (Desulfovibrio magneticus).